We begin with the raw amino-acid sequence, 601 residues long: Glutathione-regulated potassium-efflux system protein KefB (601 aa).

Transmembrane regions (helical) follow at residues 4–24, 29–49, 55–75, 87–107, 115–135, 152–172, 177–197, 207–227, 230–250, 268–288, 291–311, 324–344, and 356–376; these read SDFL…VPLA, IGAV…GLGF, EILH…GLEL, IFGV…GLLM, AAVV…LQLM, VLLF…LLAG, HFDW…LIGG, FIAA…LVLG, LFMD…GVLL, GLLL…GVLY, LLWV…VLYL, MQFA…FSSA, and ALLL…MKLV. Residues 400-519 form the RCK N-terminal domain; sequence KPQVIVVGFG…AGVTQFSRET (120 aa).

It belongs to the monovalent cation:proton antiporter 2 (CPA2) transporter (TC 2.A.37) family. KefB subfamily. As to quaternary structure, interacts with the regulatory subunit KefG.

Its subcellular location is the cell inner membrane. Its function is as follows. Pore-forming subunit of a potassium efflux system that confers protection against electrophiles. Catalyzes K(+)/H(+) antiport. This Escherichia coli O127:H6 (strain E2348/69 / EPEC) protein is Glutathione-regulated potassium-efflux system protein KefB.